The sequence spans 134 residues: U34-theraphotoxin-Cg1a (134 aa).

The N-terminal stretch at 1–19 (MKLAVVFLLTTVVFTLAQS) is a signal peptide. Disulfide bonds link C24/C35, C29/C53, and C63/C84. Residues 97–134 (EQSSTSTSSTQGPITSSTVTTQSEATTETETTTAAEGK) form a disordered region. Over residues 99–134 (SSTSTSSTQGPITSSTVTTQSEATTETETTTAAEGK) the composition is skewed to low complexity.

The protein belongs to the neurotoxin 32 family. Expressed by the venom gland.

The protein resides in the secreted. The polypeptide is U34-theraphotoxin-Cg1a (Chilobrachys guangxiensis (Chinese earth tiger tarantula)).